A 265-amino-acid chain; its full sequence is MEKRKVTIRHFLEAKGSRKLAMVTAYDYPTARLVDEAGVDGILVGDSLGMVVLGYENTLRVTLRDMVAHVAAVARARPRALVVADMPFMTYETGPRDALRAAAKLVRAGAEAVKPEGGVEIVDVVEKLTKTGVPVMGHIGLNPQRVLTLGGFRMVGKDEEARRKVLEDAKALQEAGAFALVVEFVPASLAKEVTEAVKIPTICIGAGPHCDGQILVLHDIIGLSEKPPSFAKRYADVASIIREAVAKYVAEVREGKFPTPEHYRP.

Residues D46 and D85 each coordinate Mg(2+). 3-methyl-2-oxobutanoate-binding positions include 46-47 (DS), D85, and K114. E116 is a Mg(2+) binding site. The active-site Proton acceptor is E183.

The protein belongs to the PanB family. As to quaternary structure, homodecamer; pentamer of dimers. The cofactor is Mg(2+).

It is found in the cytoplasm. The enzyme catalyses 3-methyl-2-oxobutanoate + (6R)-5,10-methylene-5,6,7,8-tetrahydrofolate + H2O = 2-dehydropantoate + (6S)-5,6,7,8-tetrahydrofolate. Its pathway is cofactor biosynthesis; coenzyme A biosynthesis. Functionally, catalyzes the reversible reaction in which hydroxymethyl group from 5,10-methylenetetrahydrofolate is transferred onto alpha-ketoisovalerate to form ketopantoate. The chain is 3-methyl-2-oxobutanoate hydroxymethyltransferase from Pyrobaculum calidifontis (strain DSM 21063 / JCM 11548 / VA1).